The primary structure comprises 418 residues: Serine hydroxymethyltransferase (418 aa).

(6S)-5,6,7,8-tetrahydrofolate is bound by residues Leu121 and 125 to 127; that span reads GHL. Lys230 bears the N6-(pyridoxal phosphate)lysine mark. 355-357 contacts (6S)-5,6,7,8-tetrahydrofolate; it reads SPF.

Belongs to the SHMT family. As to quaternary structure, homodimer. Pyridoxal 5'-phosphate is required as a cofactor.

The protein resides in the cytoplasm. It carries out the reaction (6R)-5,10-methylene-5,6,7,8-tetrahydrofolate + glycine + H2O = (6S)-5,6,7,8-tetrahydrofolate + L-serine. The protein operates within one-carbon metabolism; tetrahydrofolate interconversion. Its pathway is amino-acid biosynthesis; glycine biosynthesis; glycine from L-serine: step 1/1. Catalyzes the reversible interconversion of serine and glycine with tetrahydrofolate (THF) serving as the one-carbon carrier. This reaction serves as the major source of one-carbon groups required for the biosynthesis of purines, thymidylate, methionine, and other important biomolecules. Also exhibits THF-independent aldolase activity toward beta-hydroxyamino acids, producing glycine and aldehydes, via a retro-aldol mechanism. The polypeptide is Serine hydroxymethyltransferase (Streptococcus pyogenes serotype M18 (strain MGAS8232)).